The sequence spans 485 residues: Cobyric acid synthase (485 aa).

Residues 252–439 enclose the GATase cobBQ-type domain; it reads KVRIAVPILP…VHGLFGDDRQ (188 aa). Cysteine 334 acts as the Nucleophile in catalysis. Histidine 431 is a catalytic residue.

It belongs to the CobB/CobQ family. CobQ subfamily.

The protein operates within cofactor biosynthesis; adenosylcobalamin biosynthesis. Its function is as follows. Catalyzes amidations at positions B, D, E, and G on adenosylcobyrinic A,C-diamide. NH(2) groups are provided by glutamine, and one molecule of ATP is hydrogenolyzed for each amidation. In Azorhizobium caulinodans (strain ATCC 43989 / DSM 5975 / JCM 20966 / LMG 6465 / NBRC 14845 / NCIMB 13405 / ORS 571), this protein is Cobyric acid synthase.